A 1315-amino-acid polypeptide reads, in one-letter code: ESX secretion system protein EccC (1315 aa).

The span at 1-11 (MSTVLVRRKER) shows a compositional bias: basic residues. The segment at 1-21 (MSTVLVRRKERRQPPQMPRGE) is disordered. The Cytoplasmic portion of the chain corresponds to 1-40 (MSTVLVRRKERRQPPQMPRGEILLESPPELPEVVTNSFQN). Residues 41–61 (VLMYLPMAAGSAAMVFTFLNH) form a helical membrane-spanning segment. Residues 62 to 64 (RNT) lie on the Extracellular side of the membrane. Residues 65–85 (LQLVAGGMFALSMFGMMFGQL) form a helical membrane-spanning segment. Residues 86–1315 (SQQSGERKTK…RLIQTAYRES (1230 aa)) are Cytoplasmic-facing. FtsK domains follow at residues 456-656 (GRPL…MESR) and 813-1004 (RDPY…YESE). 479 to 486 (GATGSGKS) contributes to the ATP binding site. Residue glutamate 593 is part of the active site. The tract at residues 721–1315 (RPQVVEQPQP…RLIQTAYRES (595 aa)) is binds EsxB. ATP is bound by residues 834–839 (QTGKST), threonine 1031, 1119–1124 (ECGKSN), glutamine 1293, and 1310–1311 (TA). One can recognise a FtsK 3 domain in the interval 1099–1282 (LSPVYLDFNT…MSGNKDEGIL (184 aa)).

The cytosolic domain can form homodimers. Binds EsxB, which leads to multimerization, however EsxA disassembles the multimers, possibly by making EccC-EsxA-EsxB trimers instead of EccC-EsxB-EsxB-EccC tetramers. Forms a complex with EsxA and EsxB, probably wholly mediated by EsxB.

The protein localises to the cell membrane. Its activity is regulated as follows. EsxB binding to the third FtsK domain causes multimerization; a subsequent unknown step relieves the allosteric inhibition of linker 2 on FtsK domain 1, activating the ATPase activity; a mutant EsxB ('Ala-98') does not cause multimers to form. Functionally, part of the ESX specialized secretion system, which exports proteins from the cell including EsxA (ESAT-6) and EsxB (CFP-10). Has weak intrinsic ATPase activity; probably only the first FtsK domain can hydrolyze ATP. Might be the translocase subunit. The sequence is that of ESX secretion system protein EccC from Thermomonospora curvata (strain ATCC 19995 / DSM 43183 / JCM 3096 / KCTC 9072 / NBRC 15933 / NCIMB 10081 / Henssen B9).